The following is a 498-amino-acid chain: Guanosine-5'-triphosphate,3'-diphosphate pyrophosphatase (498 aa).

The protein belongs to the GppA/Ppx family. GppA subfamily.

The enzyme catalyses guanosine 3'-diphosphate 5'-triphosphate + H2O = guanosine 3',5'-bis(diphosphate) + phosphate + H(+). It functions in the pathway purine metabolism; ppGpp biosynthesis; ppGpp from GTP: step 2/2. Functionally, catalyzes the conversion of pppGpp to ppGpp. Guanosine pentaphosphate (pppGpp) is a cytoplasmic signaling molecule which together with ppGpp controls the 'stringent response', an adaptive process that allows bacteria to respond to amino acid starvation, resulting in the coordinated regulation of numerous cellular activities. The protein is Guanosine-5'-triphosphate,3'-diphosphate pyrophosphatase of Pectobacterium carotovorum subsp. carotovorum (strain PC1).